The following is a 70-amino-acid chain: V-type proton ATPase subunit e1 (70 aa).

The next 2 helical transmembrane spans lie at 1 to 21 (MGFLITTLIFVVVGIIASLCV) and 36 to 56 (LTLVITATVCCWMMWAIVYIA).

It belongs to the V-ATPase e1/e2 subunit family. As to quaternary structure, V-ATPase is a heteromultimeric enzyme composed of a peripheral catalytic V1 complex (components A to H) attached to an integral membrane V0 proton pore complex (components: a, c, c'', d and e).

Its subcellular location is the golgi apparatus. The protein resides in the trans-Golgi network membrane. In terms of biological role, subunit of the integral membrane V0 complex of vacuolar ATPase. V-ATPase is responsible for acidifying a variety of intracellular compartments in eukaryotic cells. The protein is V-type proton ATPase subunit e1 (VHA-e1) of Arabidopsis thaliana (Mouse-ear cress).